Consider the following 242-residue polypeptide: ATP synthase subunit a (242 aa).

The next 5 membrane-spanning stretches (helical) occupy residues leucine 28–valine 48, leucine 89–isoleucine 109, isoleucine 128–serine 148, leucine 193–leucine 213, and glycine 214–glycine 234.

It belongs to the ATPase A chain family. In terms of assembly, F-type ATPases have 2 components, CF(1) - the catalytic core - and CF(0) - the membrane proton channel. CF(1) has five subunits: alpha(3), beta(3), gamma(1), delta(1), epsilon(1). CF(0) has four main subunits: a, b, b' and c.

The protein localises to the cellular thylakoid membrane. In terms of biological role, key component of the proton channel; it plays a direct role in the translocation of protons across the membrane. The protein is ATP synthase subunit a of Synechococcus sp. (strain WH7803).